The primary structure comprises 366 residues: Transmembrane protein 26 (366 aa).

Helical transmembrane passes span 4 to 24 (LVLL…LVAV), 36 to 56 (YWLL…TLKF), and 64 to 84 (WLSP…WLLE). Asn110 carries N-linked (GlcNAc...) asparagine glycosylation. 5 helical membrane passes run 138 to 158 (MVCE…ILII), 176 to 196 (ELLL…TETL), 208 to 228 (VSGI…DLAV), 258 to 278 (IGLS…VLMI), and 282 to 302 (VINH…ALHF). The span at 319–329 (HPESPKPEHSG) shows a compositional bias: basic and acidic residues. The tract at residues 319-366 (HPESPKPEHSGPDQPSESGPSEWEDASPEALPLRTSPVTSEESYPTTP) is disordered. Over residues 354–366 (SPVTSEESYPTTP) the composition is skewed to polar residues.

Its subcellular location is the membrane. In Mus musculus (Mouse), this protein is Transmembrane protein 26 (Tmem26).